The following is a 160-amino-acid chain: S-ribosylhomocysteine lyase (160 aa).

His-57, His-61, and Cys-127 together coordinate Fe cation.

The protein belongs to the LuxS family. In terms of assembly, homodimer. It depends on Fe cation as a cofactor.

It catalyses the reaction S-(5-deoxy-D-ribos-5-yl)-L-homocysteine = (S)-4,5-dihydroxypentane-2,3-dione + L-homocysteine. Its function is as follows. Involved in the synthesis of autoinducer 2 (AI-2) which is secreted by bacteria and is used to communicate both the cell density and the metabolic potential of the environment. The regulation of gene expression in response to changes in cell density is called quorum sensing. Catalyzes the transformation of S-ribosylhomocysteine (RHC) to homocysteine (HC) and 4,5-dihydroxy-2,3-pentadione (DPD). This Streptococcus mutans serotype c (strain ATCC 700610 / UA159) protein is S-ribosylhomocysteine lyase.